The primary structure comprises 193 residues: Partner of Y14 and mago (193 aa).

Disordered stretches follow at residues 1–27 (MSTPTAYEHDADGSKFIPATQRPDGTW) and 118–142 (IQEPTLPSQSVPTESISQSDPTKRL). The segment covering 122 to 137 (TLPSQSVPTESISQSD) has biased composition (polar residues). Residues 139 to 192 (TKRLKNLRKKLREIEFLEEKIKAGLLKSPDKDQKEKMSKKNEILNEIDILKNSI) are a coiled coil.

Belongs to the pym family. As to quaternary structure, interacts (via N-terminus) with mago and tsu/Y14; the interaction is direct.

It is found in the cytoplasm. The protein resides in the nucleus. In terms of biological role, regulator of the exon junction complex (EJC), a multiprotein complex that associates immediately upstream of the exon-exon junction on mRNAs and serves as a positional landmarks for the intron exon structure of genes and directs post-transcriptional processes in the cytoplasm such as mRNA export, nonsense-mediated mRNA decay (NMD) or translation. The chain is Partner of Y14 and mago from Bombyx mori (Silk moth).